The primary structure comprises 196 residues: Probable signal peptidase I-1 (196 aa).

Over M1–N16 the chain is Cytoplasmic. A helical membrane pass occupies residues I17–A35. The Periplasmic segment spans residues E36 to T196. Active-site residues include S44 and K94.

It belongs to the peptidase S26 family.

The protein localises to the cell membrane. It catalyses the reaction Cleavage of hydrophobic, N-terminal signal or leader sequences from secreted and periplasmic proteins.. The protein is Probable signal peptidase I-1 (lepB1) of Synechocystis sp. (strain ATCC 27184 / PCC 6803 / Kazusa).